An 863-amino-acid chain; its full sequence is Facilitated trehalose transporter Tret1 (863 aa).

Residues 1–208 (MSGRDNRGAG…RIGFQQQKAT (208 aa)) form a disordered region. Residues 1–398 (MSGRDNRGAG…VYRPTTNPIY (398 aa)) lie on the Cytoplasmic side of the membrane. Over residues 28–46 (KLKEKLTRAGEELGYHRVE) the composition is skewed to basic and acidic residues. A compositionally biased stretch (polar residues) spans 47-59 (SNLSASNTGTSLD). A compositionally biased stretch (low complexity) spans 72–85 (AAPQRHPQQQFPHL). Composition is skewed to polar residues over residues 114–129 (PPQQ…RSSG) and 177–187 (KPQQQGNNKAA). Residues S254, S255, and S256 each carry the phosphoserine modification. The tract at residues 286–307 (VLQGSSTDSDEEGDDAEHKRLI) is disordered. S326 and S328 each carry phosphoserine. The interval 332 to 354 (FLTSRQNFQQQRSISTDSRKSRR) is disordered. The span at 336-347 (RQNFQQQRSIST) shows a compositional bias: polar residues. The chain crosses the membrane as a helical span at residues 399 to 419 (IWTQVLAALSVSLGSLVVGFA). Residues 420–446 (SAYTSPALVSMTNTNLTSFVVTPQAAS) are Extracellular-facing. A glycan (N-linked (GlcNAc...) asparagine) is linked at N434. The helical transmembrane segment at 447-467 (WVGGIMPLAGLAGGIAGGPFI) threads the bilayer. The Cytoplasmic segment spans residues 468–479 (EYLGRRNTILAT). Residues 480–500 (AVPFIISWLLIACAVNVVMVL) traverse the membrane as a helical segment. The Extracellular portion of the chain corresponds to 501 to 503 (CGR). Residues 504–524 (FLAGFCVGIASLSLPVYLGET) traverse the membrane as a helical segment. Topologically, residues 525-530 (VQPEVR) are cytoplasmic. The chain crosses the membrane as a helical span at residues 531-551 (GTLGLLPTAFGNIGILLCFVA). Residues 552-558 (GTYMDWS) are Extracellular-facing. The helical transmembrane segment at 559–579 (MLAFLGGTLPVPFLILMFLIP) threads the bilayer. Topologically, residues 580 to 642 (ETPRWYVSRG…ELLKRSNLKP (63 aa)) are cytoplasmic. The helical transmembrane segment at 643–663 (LSISLGLMFFQQLSGINAVIF) threads the bilayer. Over 664 to 679 (YTVQIFQDAGSTIDGN) the chain is Extracellular. A helical transmembrane segment spans residues 680–700 (VCTIIVGVVNFMATFIATVLI). At 701–706 (DRAGRK) the chain is on the cytoplasmic side. The chain crosses the membrane as a helical span at residues 707–727 (ILLYVSNVAMILTLFVLGGFF). Residues 728-746 (YCKSTGMDTSNVGWLPLSC) are Extracellular-facing. The helical transmembrane segment at 747 to 767 (FVVYILGFSLGFGPIPWLMMG) threads the bilayer. At 768–773 (EILPAK) the chain is on the cytoplasmic side. The helical transmembrane segment at 774–794 (IRGSAASVATAFNWSCTFVVT) threads the bilayer. At 795-807 (KSFQDMIDVMGAH) the chain is on the extracellular side. A helical membrane pass occupies residues 808–828 (GAFWMFGAICFVGLFFVIFYV). Topologically, residues 829–863 (PETQGKTLEDIERKMMGRVRRMSSVANIKPLSFNM) are cytoplasmic. S851 and S852 each carry phosphoserine.

This sequence belongs to the major facilitator superfamily. Sugar transporter (TC 2.A.1.1) family. Trehalose transporter subfamily.

It localises to the cell membrane. Functionally, low-capacity facilitative transporter for trehalose. Does not transport maltose, sucrose or lactose. Mediates the bidirectional transfer of trehalose. Responsible for the transport of trehalose synthesized in the fat body and the incorporation of trehalose into other tissues that require a carbon source, thereby regulating trehalose levels in the hemolymph. The sequence is that of Facilitated trehalose transporter Tret1 from Drosophila mojavensis (Fruit fly).